A 264-amino-acid chain; its full sequence is MATTTCQVVGLLLSLLGLAGCIAATGMDMWSTQDLYDNPVTAVFQYEGLWRSCVQQSSGFTECRPYFTILGLPAMLQAVRALMIVGIVLGVIGILVSIFALKCIRIGSMDDSAKAKMTLTSGILFIISGICAIIGVSVFANMLVTNFWMSTANMYSGMGGMGGMVQTVQTRYTFGAALFVGWVAGGLTLIGGVMMCIACRGLTPDDSNFKAVSYHASGQNVAYRPGGFKASTGFGSNTRNKKIYDGGARTEDDEQSHPTKYDYV.

The Cytoplasmic segment spans residues 1-6 (MATTTC). Residues 7-27 (QVVGLLLSLLGLAGCIAATGM) traverse the membrane as a helical segment. The Extracellular portion of the chain corresponds to 28–80 (DMWSTQDLYDNPVTAVFQYEGLWRSCVQQSSGFTECRPYFTILGLPAMLQAVR). The chain crosses the membrane as a helical span at residues 81–101 (ALMIVGIVLGVIGILVSIFAL). The Cytoplasmic portion of the chain corresponds to 102–122 (KCIRIGSMDDSAKAKMTLTSG). Residues 123 to 143 (ILFIISGICAIIGVSVFANML) form a helical membrane-spanning segment. Topologically, residues 144-176 (VTNFWMSTANMYSGMGGMGGMVQTVQTRYTFGA) are extracellular. A helical membrane pass occupies residues 177 to 197 (ALFVGWVAGGLTLIGGVMMCI). Topologically, residues 198 to 264 (ACRGLTPDDS…QSHPTKYDYV (67 aa)) are cytoplasmic. The tract at residues 198 to 264 (ACRGLTPDDS…QSHPTKYDYV (67 aa)) is required for role in regulation of RANKL-induced osteoclast differentiation. The residue at position 217 (S217) is a Phosphoserine. A disordered region spans residues 241-264 (KKIYDGGARTEDDEQSHPTKYDYV). Positions 242–264 (KIYDGGARTEDDEQSHPTKYDYV) are enriched in basic and acidic residues.

It belongs to the claudin family. Interacts with TJP2/ZO-2. Interacts with TJP1/ZO-1. Interacts with YAP1 (phosphorylated); the interaction sequesters YAP1 away from the nucleus and thereby restricts transcription of YAP1 target genes. In terms of assembly, interacts with CLDN19. Expressed in the lung (at protein level). In terms of tissue distribution, expressed in lung. Expressed in the stomach. As to expression, expressed in lung. Expressed in stomach. Expressed in bone. In terms of tissue distribution, expressed in stomach.

The protein resides in the cell junction. It is found in the tight junction. The protein localises to the cell membrane. It localises to the lateral cell membrane. Its function is as follows. Involved in alveolar fluid homeostasis via regulation of alveolar epithelial tight junction composition and therefore ion transport and solute permeability, potentially via downstream regulation of the actin cytoskeleton organization and beta-2-adrenergic signaling. Required for lung alveolarization and maintenance of the paracellular alveolar epithelial barrier. Acts to maintain epithelial progenitor cell proliferation and organ size, via regulation of YAP1 localization away from the nucleus and thereby restriction of YAP1 target gene transcription. Acts as a negative regulator of RANKL-induced osteoclast differentiation, potentially via relocation of TJP2/ZO-2 away from the nucleus, subsequently involved in bone resorption in response to calcium deficiency. Mediates the osteoprotective effects of estrogen, potentially via acting downstream of estrogen signaling independently of RANKL signaling pathways. Functionally, involved in the maintenance of homeostasis of the alveolar microenvironment via regulation of pH and subsequent T-cell activation in the alveolar space, is therefore indirectly involved in limiting C.neoformans infection. In terms of biological role, required for the formation of the gastric paracellular barrier via its role in tight junction formation, thereby involved in the response to gastric acidification. In Mus musculus (Mouse), this protein is Claudin-18 (Cldn18).